The primary structure comprises 84 residues: Putative defensin-like protein 139 (84 aa).

An N-terminal signal peptide occupies residues 1–28 (MEPSNQIFFYLRRSKLLSGLGEIRMAKG). Cystine bridges form between Cys-37/Cys-81, Cys-46/Cys-65, Cys-51/Cys-75, and Cys-55/Cys-77.

This sequence belongs to the DEFL family.

It is found in the secreted. This is Putative defensin-like protein 139 (LCR7) from Arabidopsis thaliana (Mouse-ear cress).